We begin with the raw amino-acid sequence, 287 residues long: MAIRKFKPYTPGTRQRVVTDFSEITSAKPERSLIVPKHRVKGRNNRGVITCRHRGGGHKRQYRLVDFRRDKRNINAKVAAIHYDPHRNARLALLFYEDGEKRYIIAPAGVKVGQNVISGESVPIEDGNAMPLSVMPLGSSVHCVELYAGRGAQMVRSAGASAQVMAKEGDYVALKLPSTEVRLVRKECYATLGEVGNSEIRNTSLGKAGRRRWLGRRPQVRGSVMNPCDHPHGGGEGKAPIGRAGPVTPWGKPALGLKTRKKNKPSNKLVVRRRRRISKRSRGGRDS.

The tract at residues 221-287 is disordered; the sequence is RGSVMNPCDH…SKRSRGGRDS (67 aa). Residues 258–287 are compositionally biased toward basic residues; that stretch reads KTRKKNKPSNKLVVRRRRRISKRSRGGRDS.

This sequence belongs to the universal ribosomal protein uL2 family. As to quaternary structure, part of the 50S ribosomal subunit. Forms a bridge to the 30S subunit in the 70S ribosome.

Functionally, one of the primary rRNA binding proteins. Required for association of the 30S and 50S subunits to form the 70S ribosome, for tRNA binding and peptide bond formation. It has been suggested to have peptidyltransferase activity; this is somewhat controversial. Makes several contacts with the 16S rRNA in the 70S ribosome. The sequence is that of Large ribosomal subunit protein uL2 from Prochlorococcus marinus (strain MIT 9215).